A 333-amino-acid polypeptide reads, in one-letter code: Glycerol-3-phosphate dehydrogenase [NAD(P)+] (333 aa).

Residues S10, F11, R31, and K105 each contribute to the NADPH site. Positions 105, 136, and 138 each coordinate sn-glycerol 3-phosphate. A140 contributes to the NADPH binding site. 5 residues coordinate sn-glycerol 3-phosphate: K191, D244, S254, R255, and N256. The active-site Proton acceptor is K191. R255 is a binding site for NADPH. Residues V279 and E281 each coordinate NADPH.

Belongs to the NAD-dependent glycerol-3-phosphate dehydrogenase family.

It is found in the cytoplasm. The catalysed reaction is sn-glycerol 3-phosphate + NAD(+) = dihydroxyacetone phosphate + NADH + H(+). It carries out the reaction sn-glycerol 3-phosphate + NADP(+) = dihydroxyacetone phosphate + NADPH + H(+). Its pathway is membrane lipid metabolism; glycerophospholipid metabolism. Functionally, catalyzes the reduction of the glycolytic intermediate dihydroxyacetone phosphate (DHAP) to sn-glycerol 3-phosphate (G3P), the key precursor for phospholipid synthesis. This chain is Glycerol-3-phosphate dehydrogenase [NAD(P)+], found in Leptospira biflexa serovar Patoc (strain Patoc 1 / Ames).